A 467-amino-acid chain; its full sequence is UDP-N-acetylmuramoylalanine--D-glutamate ligase (467 aa).

121–127 (GTNGKST) provides a ligand contact to ATP.

The protein belongs to the MurCDEF family.

The protein localises to the cytoplasm. The enzyme catalyses UDP-N-acetyl-alpha-D-muramoyl-L-alanine + D-glutamate + ATP = UDP-N-acetyl-alpha-D-muramoyl-L-alanyl-D-glutamate + ADP + phosphate + H(+). It functions in the pathway cell wall biogenesis; peptidoglycan biosynthesis. Its function is as follows. Cell wall formation. Catalyzes the addition of glutamate to the nucleotide precursor UDP-N-acetylmuramoyl-L-alanine (UMA). In Brucella suis biovar 1 (strain 1330), this protein is UDP-N-acetylmuramoylalanine--D-glutamate ligase.